We begin with the raw amino-acid sequence, 401 residues long: tRNA(Met) cytidine acetate ligase (401 aa).

ATP is bound by residues 7–20, Gly101, Asn160, and 185–186; these read VVEY…HLYH and RI.

The protein belongs to the TmcAL family.

The protein localises to the cytoplasm. The catalysed reaction is cytidine(34) in elongator tRNA(Met) + acetate + ATP = N(4)-acetylcytidine(34) in elongator tRNA(Met) + AMP + diphosphate. In terms of biological role, catalyzes the formation of N(4)-acetylcytidine (ac(4)C) at the wobble position of elongator tRNA(Met), using acetate and ATP as substrates. First activates an acetate ion to form acetyladenylate (Ac-AMP) and then transfers the acetyl group to tRNA to form ac(4)C34. The polypeptide is tRNA(Met) cytidine acetate ligase (Anoxybacillus flavithermus (strain DSM 21510 / WK1)).